The sequence spans 273 residues: Dermonecrotic toxin LdSicTox-alphaIB3aii (273 aa).

The active site involves His5. Positions 25 and 27 each coordinate Mg(2+). His41 functions as the Nucleophile in the catalytic mechanism. Intrachain disulfides connect Cys45–Cys51 and Cys47–Cys190. Position 85 (Asp85) interacts with Mg(2+).

The protein belongs to the arthropod phospholipase D family. Class II subfamily. The cofactor is Mg(2+). In terms of tissue distribution, expressed by the venom gland.

It localises to the secreted. It catalyses the reaction an N-(acyl)-sphingosylphosphocholine = an N-(acyl)-sphingosyl-1,3-cyclic phosphate + choline. The catalysed reaction is an N-(acyl)-sphingosylphosphoethanolamine = an N-(acyl)-sphingosyl-1,3-cyclic phosphate + ethanolamine. It carries out the reaction a 1-acyl-sn-glycero-3-phosphocholine = a 1-acyl-sn-glycero-2,3-cyclic phosphate + choline. The enzyme catalyses a 1-acyl-sn-glycero-3-phosphoethanolamine = a 1-acyl-sn-glycero-2,3-cyclic phosphate + ethanolamine. Dermonecrotic toxins cleave the phosphodiester linkage between the phosphate and headgroup of certain phospholipids (sphingolipid and lysolipid substrates), forming an alcohol (often choline) and a cyclic phosphate. This toxin acts on sphingomyelin (SM). It may also act on ceramide phosphoethanolamine (CPE), lysophosphatidylcholine (LPC) and lysophosphatidylethanolamine (LPE), but not on lysophosphatidylserine (LPS), and lysophosphatidylglycerol (LPG). It acts by transphosphatidylation, releasing exclusively cyclic phosphate products as second products. Induces dermonecrosis, hemolysis, increased vascular permeability, edema, inflammatory response, and platelet aggregation. The sequence is that of Dermonecrotic toxin LdSicTox-alphaIB3aii from Loxosceles deserta (Desert recluse spider).